The chain runs to 335 residues: Endo-1,4-beta-xylanase S20 (335 aa).

Residues 1 to 22 (MLRKLVTGALAAALLLSGQSNA) form the signal peptide. The region spanning 39-241 (NNKNETGNGN…GSGYVDFTYA (203 aa)) is the GH11 domain. 2 N-linked (GlcNAc...) asparagine glycosylation sites follow: asparagine 42 and asparagine 78. The active-site Nucleophile is glutamate 134. Residue asparagine 202 is glycosylated (N-linked (GlcNAc...) asparagine). Catalysis depends on glutamate 228, which acts as the Proton donor. N-linked (GlcNAc...) asparagine glycosylation occurs at asparagine 251. The tract at residues 251–291 (NASAPSNNNNNNNNNNDNNGNWNNWNNNNNNNNNNNNNNNN) is disordered. Over residues 257-291 (NNNNNNNNNNDNNGNWNNWNNNNNNNNNNNNNNNN) the composition is skewed to low complexity. The region spanning 300-335 (NCAAIWGQCGGSGYNGPKCCKQGSCKQINQWYSQCQ) is the CBM1 domain.

The protein belongs to the glycosyl hydrolase 11 (cellulase G) family.

Its subcellular location is the secreted. The enzyme catalyses Endohydrolysis of (1-&gt;4)-beta-D-xylosidic linkages in xylans.. The protein operates within glycan degradation; xylan degradation. Endo-1,4-beta-xylanase involved in the hydrolysis of xylan, a major structural heterogeneous polysaccharide found in plant biomass representing the second most abundant polysaccharide in the biosphere, after cellulose. The polypeptide is Endo-1,4-beta-xylanase S20 (xynS20) (Neocallimastix patriciarum (Rumen fungus)).